Reading from the N-terminus, the 279-residue chain is Cell death abnormality protein 2 (279 aa).

In terms of domain architecture, SH2 spans Phe14 to Lys115. An SH3 1 domain is found at Pro116–Glu176. The segment at Arg181–Leu213 is disordered. Residues Ser202 to Ile211 show a composition bias toward polar residues. An SH3 2 domain is found at Gln214 to Val277.

This sequence belongs to the CRK family. As to quaternary structure, interacts with ced-5 (via C-terminus which contains a candidate SH3-binding, proline-rich region). Forms a ternary complex with ced-5 and ced-12. Interacts (via SH2 domain) with src-1 (when activated and phosphorylated at 'Tyr-416').

In terms of biological role, required for cell migration and engulfment of cell corpses but not for programmed cell death/apoptosis. Has a role in the migration of the 2 gonadal distal tip cells (DTCs). Plays a role in protecting dopaminergic neurons from oxidative stress-induced degeneration. The polypeptide is Cell death abnormality protein 2 (Caenorhabditis elegans).